The chain runs to 330 residues: Phosphate acyltransferase (330 aa).

The protein belongs to the PlsX family. As to quaternary structure, homodimer. Probably interacts with PlsY.

It localises to the cytoplasm. The catalysed reaction is a fatty acyl-[ACP] + phosphate = an acyl phosphate + holo-[ACP]. The protein operates within lipid metabolism; phospholipid metabolism. Its function is as follows. Catalyzes the reversible formation of acyl-phosphate (acyl-PO(4)) from acyl-[acyl-carrier-protein] (acyl-ACP). This enzyme utilizes acyl-ACP as fatty acyl donor, but not acyl-CoA. The protein is Phosphate acyltransferase of Bacillus mycoides (strain KBAB4) (Bacillus weihenstephanensis).